A 272-amino-acid chain; its full sequence is Cerberus (272 aa).

Residues 1-17 (MHLLLVQLLVLLPLGKA) form the signal peptide. Cystine bridges form between Cys-162–Cys-209, Cys-176–Cys-223, Cys-186–Cys-239, and Cys-190–Cys-241. The CTCK domain occupies 162-246 (CRTVPFNQTI…EECQCMVKTE (85 aa)). Residues Asn-168 and Asn-222 are each glycosylated (N-linked (GlcNAc...) asparagine).

The protein belongs to the DAN family. Forms monomers and predominantly dimers. In terms of processing, N-glycosylated.

Its subcellular location is the secreted. In terms of biological role, cytokine that may play a role in anterior neural induction and somite formation during embryogenesis in part, through a BMP-inhibitory mechanism. Can regulate Nodal signaling during gastrulation as well as the formation and patterning of the primitive streak. This is Cerberus (Cer1) from Mus musculus (Mouse).